Here is a 1382-residue protein sequence, read N- to C-terminus: Hepatocyte growth factor receptor (1382 aa).

Residues 1–24 form the signal peptide; the sequence is MKASAVLAPGILALLFTLVQGSDG. Residues 25-935 lie on the Extracellular side of the membrane; it reads ECHEALAKSE…VQPDQNFTGL (911 aa). Positions 27–516 constitute a Sema domain; the sequence is HEALAKSEMN…TGKRITKIPL (490 aa). N-linked (GlcNAc...) asparagine glycans are attached at residues Asn-45, Asn-100, and Asn-106. Intrachain disulfides connect Cys-95-Cys-101, Cys-98-Cys-160, Cys-133-Cys-141, and Cys-173-Cys-176. Residues Asn-203 and Asn-359 are each glycosylated (N-linked (GlcNAc...) asparagine). 2 disulfide bridges follow: Cys-299/Cys-364 and Cys-386/Cys-398. 2 N-linked (GlcNAc...) asparagine glycosylation sites follow: Asn-400 and Asn-406. Intrachain disulfides connect Cys-521–Cys-539, Cys-527–Cys-562, Cys-530–Cys-546, and Cys-542–Cys-552. 3 consecutive IPT/TIG domains span residues 564–656, 658–740, and 743–837; these read PAIH…FSYV, PVIT…FSYQ, and PVVY…LIYV. An O-linked (Man) threonine glycan is attached at Thr-583. N-linked (GlcNAc...) asparagine glycosylation is found at Asn-608 and Asn-636. O-linked (Man) threonine glycosylation is found at Thr-677 and Thr-762. Asn-786, Asn-880, and Asn-931 each carry an N-linked (GlcNAc...) asparagine glycan. The helical transmembrane segment at 936–956 threads the bilayer; the sequence is IVGVVSISIILLLLLGLFLWM. Residues 957 to 1382 are Cytoplasmic-facing; it reads KKRKQIKDLG…QDNINGEVDT (426 aa). Ser-967 bears the Phosphoserine mark. At Thr-978 the chain carries Phosphothreonine. A phosphoserine mark is found at Ser-991, Ser-998, and Ser-1001. Residue Tyr-1004 is modified to Phosphotyrosine. The region spanning 1079 to 1346 is the Protein kinase domain; the sequence is VHFNEVIGRG…RISAIFSTFI (268 aa). Residues 1085-1093 and Lys-1111 contribute to the ATP site; that span reads IGRGHFGCV. Residue Asp-1205 is the Proton acceptor of the active site. The interval 1213–1382 is interaction with RANBP9; that stretch reads LDEKFTVKVA…QDNINGEVDT (170 aa). At Tyr-1231 the chain carries Phosphotyrosine. A phosphotyrosine; by autocatalysis mark is found at Tyr-1235 and Tyr-1236. Thr-1290 is subject to Phosphothreonine. The tract at residues 1321 to 1360 is interaction with MUC20; the sequence is WHPKAEMRPSFSELVSRISAIFSTFIGEHYVHVNATYVNV. A phosphotyrosine; by autocatalysis mark is found at Tyr-1350 and Tyr-1357. At Tyr-1366 the chain carries Phosphotyrosine.

The protein belongs to the protein kinase superfamily. Tyr protein kinase family. As to quaternary structure, heterodimer made of an alpha chain (50 kDa) and a beta chain (145 kDa) which are disulfide linked. Binds PLXNB1. Interacts when phosphorylated with downstream effectors including STAT3, PIK3R1, SRC, PCLG1, GRB2 and GAB1. Interacts with SPSB1, SPSB2 and SPSB4. Interacts with INPP5D/SHIP1. When phosphorylated at Tyr-1357, interacts with INPPL1/SHIP2. Interacts with RANBP9 and RANBP10, as well as SPSB1, SPSB2, SPSB3 and SPSB4. SPSB1 binding occurs in the presence and in the absence of HGF, however HGF treatment has a positive effect on this interaction. Interacts with MUC20; prevents interaction with GRB2 and suppresses hepatocyte growth factor-induced cell proliferation. Interacts with GRB10. Interacts with PTPN1 and PTPN2. Interacts with HSP90AA1 and HSP90AB1; the interaction suppresses MET kinase activity. Interacts with tensin TNS3. Interacts (when phosphorylated) with tensin TNS4 (via SH2 domain); the interaction increases MET protein stability by inhibiting MET endocytosis and subsequent lysosomal degradation. Autophosphorylated in response to ligand binding on Tyr-1235 and Tyr-1236 in the kinase domain leading to further phosphorylation of Tyr-1350 and Tyr-1357 in the C-terminal multifunctional docking site. Dephosphorylated by PTPRJ at Tyr-1350 and Tyr-1366. Dephosphorylated by PTPN1 and PTPN2. In terms of processing, ubiquitinated. Ubiquitination by CBL regulates the receptor stability and activity through proteasomal degradation. Post-translationally, O-mannosylation of IPT/TIG domains by TMEM260 is required for protein maturation. O-mannosylated residues are composed of single mannose glycans that are not elongated or modified.

It is found in the membrane. It carries out the reaction L-tyrosyl-[protein] + ATP = O-phospho-L-tyrosyl-[protein] + ADP + H(+). In its inactive state, the C-terminal tail interacts with the catalytic domain and inhibits the kinase activity. Upon ligand binding, the C-terminal tail is displaced and becomes phosphorylated, thus increasing the kinase activity. Receptor tyrosine kinase that transduces signals from the extracellular matrix into the cytoplasm by binding to hepatocyte growth factor/HGF ligand. Regulates many physiological processes including proliferation, scattering, morphogenesis and survival. Ligand binding at the cell surface induces autophosphorylation of MET on its intracellular domain that provides docking sites for downstream signaling molecules. Following activation by ligand, interacts with the PI3-kinase subunit PIK3R1, PLCG1, SRC, GRB2, STAT3 or the adapter GAB1. Recruitment of these downstream effectors by MET leads to the activation of several signaling cascades including the RAS-ERK, PI3 kinase-AKT, or PLCgamma-PKC. The RAS-ERK activation is associated with the morphogenetic effects while PI3K/AKT coordinates prosurvival effects. During embryonic development, MET signaling plays a role in gastrulation, development and migration of muscles and neuronal precursors, angiogenesis and kidney formation. In adults, participates in wound healing as well as organ regeneration and tissue remodeling. Also promotes differentiation and proliferation of hematopoietic cells. In Microcebus murinus (Gray mouse lemur), this protein is Hepatocyte growth factor receptor (MET).